The following is a 134-amino-acid chain: uncharacterized protein (134 aa).

This sequence belongs to the orthopoxviruses B21 protein family.

This is an uncharacterized protein from Bos taurus (Bovine).